The following is a 285-amino-acid chain: 4-hydroxybenzoate octaprenyltransferase (285 aa).

7 helical membrane passes run 17-37 (PVGIFLLLWPTLWALWIAGAG), 41-61 (PKVLLVFVAGVALMRSAGCVI), 92-112 (LLLFAGLCLVAFGLVLLLNPL), 135-155 (HWPQAYLGAAFGWAVPMAFAA), 158-178 (GTVPIAAWLLFIATVLWATVY), 216-236 (ALLLLLFWIGYREGLGFYYYL), and 263-283 (AFLNNNAFGAVIFGGIALHYL).

This sequence belongs to the UbiA prenyltransferase family. Requires Mg(2+) as cofactor.

The protein resides in the cell inner membrane. It catalyses the reaction all-trans-octaprenyl diphosphate + 4-hydroxybenzoate = 4-hydroxy-3-(all-trans-octaprenyl)benzoate + diphosphate. It participates in cofactor biosynthesis; ubiquinone biosynthesis. In terms of biological role, catalyzes the prenylation of para-hydroxybenzoate (PHB) with an all-trans polyprenyl group. Mediates the second step in the final reaction sequence of ubiquinone-8 (UQ-8) biosynthesis, which is the condensation of the polyisoprenoid side chain with PHB, generating the first membrane-bound Q intermediate 3-octaprenyl-4-hydroxybenzoate. The chain is 4-hydroxybenzoate octaprenyltransferase from Nitrosococcus oceani (strain ATCC 19707 / BCRC 17464 / JCM 30415 / NCIMB 11848 / C-107).